The sequence spans 351 residues: Methionine import ATP-binding protein MetN (351 aa).

An ABC transporter domain is found at 2–241 (IVTEALTKAF…PQHAVTRAFV (240 aa)). Residue 38-45 (GRSGAGKS) coordinates ATP.

This sequence belongs to the ABC transporter superfamily. Methionine importer (TC 3.A.1.24) family. As to quaternary structure, the complex is composed of two ATP-binding proteins (MetN), two transmembrane proteins (MetI) and a solute-binding protein (MetQ).

It is found in the cell inner membrane. The catalysed reaction is L-methionine(out) + ATP + H2O = L-methionine(in) + ADP + phosphate + H(+). It catalyses the reaction D-methionine(out) + ATP + H2O = D-methionine(in) + ADP + phosphate + H(+). Its function is as follows. Part of the ABC transporter complex MetNIQ involved in methionine import. Responsible for energy coupling to the transport system. The sequence is that of Methionine import ATP-binding protein MetN from Rhodospirillum rubrum (strain ATCC 11170 / ATH 1.1.1 / DSM 467 / LMG 4362 / NCIMB 8255 / S1).